A 271-amino-acid polypeptide reads, in one-letter code: Transmembrane protein 33 homolog (271 aa).

Residues 1–32 (MVEIVEEPDDHQSSSTGAGSSGSSSAPPPPPP) form a disordered region. Residues 13 to 25 (SSSTGAGSSGSSS) are compositionally biased toward low complexity. Transmembrane regions (helical) follow at residues 56 to 76 (VLTVFFALNYMIPFIGLVPAH), 125 to 145 (VVFLMAAPVSMAALPVTIYAA), and 180 to 200 (ALGIIACSEIFLVPLLVSLIF).

This sequence belongs to the PER33/POM33 family.

It is found in the membrane. This is Transmembrane protein 33 homolog from Caenorhabditis elegans.